We begin with the raw amino-acid sequence, 181 residues long: ATP-dependent protease subunit HslV (181 aa).

Residue threonine 6 is part of the active site. Alanine 162, cysteine 165, and threonine 168 together coordinate Na(+).

Belongs to the peptidase T1B family. HslV subfamily. As to quaternary structure, a double ring-shaped homohexamer of HslV is capped on each side by a ring-shaped HslU homohexamer. The assembly of the HslU/HslV complex is dependent on binding of ATP.

The protein localises to the cytoplasm. It carries out the reaction ATP-dependent cleavage of peptide bonds with broad specificity.. Its activity is regulated as follows. Allosterically activated by HslU binding. Functionally, protease subunit of a proteasome-like degradation complex believed to be a general protein degrading machinery. The chain is ATP-dependent protease subunit HslV from Solidesulfovibrio magneticus (strain ATCC 700980 / DSM 13731 / RS-1) (Desulfovibrio magneticus).